A 212-amino-acid polypeptide reads, in one-letter code: Probable GTP-binding protein EngB (212 aa).

The EngB-type G domain maps to 38–210 (ALPQIAFVGK…KTSLAKCIKL (173 aa)). GTP contacts are provided by residues 46 to 53 (GKSNVGKS), 73 to 77 (GRTRQ), 91 to 94 (DLPG), 158 to 161 (TKSD), and 189 to 191 (VSS). 2 residues coordinate Mg(2+): Ser53 and Thr75.

Belongs to the TRAFAC class TrmE-Era-EngA-EngB-Septin-like GTPase superfamily. EngB GTPase family. The cofactor is Mg(2+).

Functionally, necessary for normal cell division and for the maintenance of normal septation. The polypeptide is Probable GTP-binding protein EngB (Rickettsia bellii (strain OSU 85-389)).